Reading from the N-terminus, the 559-residue chain is MTTPSKFRDIEIRAPRGNTLTAKSWLTEAPLRMLMNNLDPEVAENPKELVVYGGIGRAARNWECYDRIVETLRQLNDDETLLVQSGKPVGVFKTHADAPRVLIANSNLVPHWATWEHFNELDARGLAMYGQMTAGSWIYIGSQGIVQGTYETFVEAGRQHYDGNLAGRWVLTAGLGGMGGAQPLAATLAGACSLNIECQQSRIDFRLRSRYVDEQAKDLDDALARIARYTAEGKAISIALLGNAAEILPELVRRGVRPDMVTDQTSAHDPLNGYLPAGWTWEQYRDRAQTDPAGVVKAAKRSMAVHVQAMLAFQKLGIPTFDYGNNIRQMAKEEGVANAFDFPGFVPAYIRPLFCRGIGPFRWAALSGDPQDIYKTDAKVKELIPDDAHLHRWLDMARERISFQGLPARICWVGLGLRAKLGLAFNEMVRSGELSAPIVIGRDHLDSGSVSSPNRETEAMQDGSDAVSDWPLLNALLNTASGATWVSLHHGGGVGMGFSQHSGMVIVCDGTDAAAARIARVLTNDPGTGVMRHADAGYPIAIDCAREQGLNLPMITGKR.

NAD(+) is bound by residues 53-54 (GG), Q131, 177-179 (GMG), E197, R202, 243-244 (NA), 264-268 (QTSAH), 274-275 (YL), and Y323. C411 is a catalytic residue. Residue G493 coordinates NAD(+).

Belongs to the urocanase family. The cofactor is NAD(+).

The protein resides in the cytoplasm. It carries out the reaction 4-imidazolone-5-propanoate = trans-urocanate + H2O. It functions in the pathway amino-acid degradation; L-histidine degradation into L-glutamate; N-formimidoyl-L-glutamate from L-histidine: step 2/3. In terms of biological role, catalyzes the conversion of urocanate to 4-imidazolone-5-propionate. This is Urocanate hydratase from Pseudomonas paraeruginosa (strain DSM 24068 / PA7) (Pseudomonas aeruginosa (strain PA7)).